Here is a 327-residue protein sequence, read N- to C-terminus: Probable cell division protein WhiA (327 aa).

Residues Ser-275–Lys-308 constitute a DNA-binding region (H-T-H motif). The disordered stretch occupies residues Lys-306–Ala-327.

Belongs to the WhiA family.

Involved in cell division and chromosome segregation. The protein is Probable cell division protein WhiA of Rhodococcus jostii (strain RHA1).